The following is a 391-amino-acid chain: Homocysteine-responsive endoplasmic reticulum-resident ubiquitin-like domain member 1 protein (391 aa).

Methionine 1 is subject to N-acetylmethionine. Over 1–263 (MESETEPEPV…VEEDDEINRD (263 aa)) the chain is Cytoplasmic. Residues 10-72 (VTLLVKSPNQ…LLDHQCLRDL (63 aa)) form the Ubiquitin-like domain. The interval 100–126 (KVAESTEEPAGSNRGQYPEDSSSDGLR) is disordered. Polar residues predominate over residues 112–124 (NRGQYPEDSSSDG). An interaction with UBQLN1 region spans residues 115 to 200 (QYPEDSSSDG…ASGAFVPPPS (86 aa)). Serine 135 carries the post-translational modification Phosphoserine. A helical transmembrane segment spans residues 264–284 (WLDWTYSAATFSVFLSILYFY). Topologically, residues 285 to 289 (SSLSR) are lumenal. Residues 290–310 (FLMVMGATVVMYLHHVGWFPF) traverse the membrane as a helical segment. Topologically, residues 311–391 (RPRPVQNFPN…LPEGPPAIAN (81 aa)) are cytoplasmic. Residues 318–359 (FPNDGPPPDIVNQDPNNNLQEGTDPETEDPNHVPPDRGVLDG) are disordered. Over residues 346–357 (DPNHVPPDRGVL) the composition is skewed to basic and acidic residues.

In terms of assembly, interacts with PSEN1 and PSEN2. Interacts with UBXN6. Interacts with UBQLN1, UBQLN2 and UBQLN4. Component of the HRD1 complex, which comprises at least SYNV1/HRD1, FAM8A1, HERPUD1/HERP, OS9, SEL1L and UBE2J1. FAM8A1 binding to SYNV1 may promote recruitment of HERPUD1 to the HRD1 complex.

The protein resides in the endoplasmic reticulum membrane. Component of the endoplasmic reticulum quality control (ERQC) system also called ER-associated degradation (ERAD) involved in ubiquitin-dependent degradation of misfolded endoplasmic reticulum proteins. Binds to ubiquilins and this interaction is required for efficient degradation of CD3D via the ERAD pathway. The sequence is that of Homocysteine-responsive endoplasmic reticulum-resident ubiquitin-like domain member 1 protein (HERPUD1) from Pongo abelii (Sumatran orangutan).